Reading from the N-terminus, the 187-residue chain is Resolvase OPG149 (187 aa).

This sequence belongs to the RuvC family. Poxviruses-type subfamily. Requires Mg(2+) as cofactor.

Its function is as follows. Plays a role in DNA replication by cleaving viral DNA concatamers to yield unit-length viral genomes. The concatamer junctions contain inverted repeat sequences that can be extruded as cruciforms, yielding Holliday junctions that A22 protein cleaves. In Cynomys gunnisoni (Gunnison's prairie dog), this protein is Resolvase OPG149 (OPG149).